A 583-amino-acid polypeptide reads, in one-letter code: Threonine--tRNA ligase (583 aa).

The tract at residues 185 to 478 (DHRKLGRELN…LVEHYGGAFP (294 aa)) is catalytic. Zn(2+) contacts are provided by cysteine 278, histidine 329, and histidine 455.

It belongs to the class-II aminoacyl-tRNA synthetase family. As to quaternary structure, homodimer. Zn(2+) serves as cofactor.

The protein localises to the cytoplasm. The catalysed reaction is tRNA(Thr) + L-threonine + ATP = L-threonyl-tRNA(Thr) + AMP + diphosphate + H(+). Catalyzes the attachment of threonine to tRNA(Thr) in a two-step reaction: L-threonine is first activated by ATP to form Thr-AMP and then transferred to the acceptor end of tRNA(Thr). Also edits incorrectly charged L-seryl-tRNA(Thr). This Borrelia recurrentis (strain A1) protein is Threonine--tRNA ligase.